We begin with the raw amino-acid sequence, 434 residues long: Nicotinate phosphoribosyltransferase (434 aa).

His-242 carries the phosphohistidine; by autocatalysis modification.

Belongs to the NAPRTase family. Transiently phosphorylated on a His residue during the reaction cycle. Phosphorylation strongly increases the affinity for substrates and increases the rate of nicotinate D-ribonucleotide production. Dephosphorylation regenerates the low-affinity form of the enzyme, leading to product release.

It carries out the reaction nicotinate + 5-phospho-alpha-D-ribose 1-diphosphate + ATP + H2O = nicotinate beta-D-ribonucleotide + ADP + phosphate + diphosphate. It participates in cofactor biosynthesis; NAD(+) biosynthesis; nicotinate D-ribonucleotide from nicotinate: step 1/1. Its function is as follows. Catalyzes the synthesis of beta-nicotinate D-ribonucleotide from nicotinate and 5-phospho-D-ribose 1-phosphate at the expense of ATP. This Brucella anthropi (strain ATCC 49188 / DSM 6882 / CCUG 24695 / JCM 21032 / LMG 3331 / NBRC 15819 / NCTC 12168 / Alc 37) (Ochrobactrum anthropi) protein is Nicotinate phosphoribosyltransferase.